The following is an 86-amino-acid chain: MEPVDPRLEPWKHPGSQPKTACTNCYCKKCCFHCQVCFITKALGISYGRKKRRQRRRPPQGSQTHQVSLSKQPTSQSRGDPTGPKE.

An interaction with human CREBBP region spans residues 1-24 (MEPVDPRLEPWKHPGSQPKTACTN). A transactivation region spans residues 1–48 (MEPVDPRLEPWKHPGSQPKTACTNCYCKKCCFHCQVCFITKALGISYG). Residues cysteine 22, cysteine 25, and cysteine 27 each coordinate Zn(2+). The tract at residues 22 to 37 (CTNCYCKKCCFHCQVC) is cysteine-rich. Lysine 28 carries the post-translational modification N6-acetyllysine; by host PCAF. Zn(2+) contacts are provided by cysteine 30, histidine 33, cysteine 34, and cysteine 37. The core stretch occupies residues 38 to 48 (FITKALGISYG). Basic residues predominate over residues 48 to 58 (GRKKRRQRRRP). The interval 48 to 86 (GRKKRRQRRRPPQGSQTHQVSLSKQPTSQSRGDPTGPKE) is disordered. The Nuclear localization signal, RNA-binding (TAR), and protein transduction signature appears at 49 to 57 (RKKRRQRRR). An interaction with the host capping enzyme RNGTT region spans residues 49-86 (RKKRRQRRRPPQGSQTHQVSLSKQPTSQSRGDPTGPKE). Lysine 50 and lysine 51 each carry N6-acetyllysine; by host EP300 and GCN5L2. 2 positions are modified to asymmetric dimethylarginine; by host PRMT6: arginine 52 and arginine 53. Over residues 62–79 (SQTHQVSLSKQPTSQSRG) the composition is skewed to polar residues. Lysine 71 is covalently cross-linked (Glycyl lysine isopeptide (Lys-Gly) (interchain with G-Cter in ubiquitin)). The Cell attachment site signature appears at 78–80 (RGD).

This sequence belongs to the lentiviruses Tat family. In terms of assembly, interacts with host CCNT1. Associates with the P-TEFb complex composed at least of Tat, P-TEFb (CDK9 and CCNT1), TAR RNA, RNA Pol II. Recruits the HATs CREBBP, TAF1/TFIID, EP300, PCAF and GCN5L2. Interacts with host KAT5/Tip60; this interaction targets the latter to degradation. Interacts with the host deacetylase SIRT1. Interacts with host capping enzyme RNGTT; this interaction stimulates RNGTT. Binds to host KDR, and to the host integrins ITGAV/ITGB3 and ITGA5/ITGB1. Interacts with host KPNB1/importin beta-1 without previous binding to KPNA1/importin alpha-1. Interacts with EIF2AK2. Interacts with host nucleosome assembly protein NAP1L1; this interaction may be required for the transport of Tat within the nucleus, since the two proteins interact at the nuclear rim. Interacts with host C1QBP/SF2P32; this interaction involves lysine-acetylated Tat. Interacts with the host chemokine receptors CCR2, CCR3 and CXCR4. Interacts with host DPP4/CD26; this interaction may trigger an anti-proliferative effect. Interacts with host LDLR. Interacts with the host extracellular matrix metalloproteinase MMP1. Interacts with host PRMT6; this interaction mediates Tat's methylation. Interacts with, and is ubiquitinated by MDM2/Hdm2. Interacts with host PSMC3 and HTATIP2. Interacts with STAB1; this interaction may overcome SATB1-mediated repression of IL2 and IL2RA (interleukin) in T cells by binding to the same domain than HDAC1. Interacts (when acetylated) with human CDK13, thereby increasing HIV-1 mRNA splicing and promoting the production of the doubly spliced HIV-1 protein Nef. Interacts with host TBP; this interaction modulates the activity of transcriptional pre-initiation complex. Interacts with host RELA. Interacts with host PLSCR1; this interaction negatively regulates Tat transactivation activity by altering its subcellular distribution. Asymmetrical arginine methylation by host PRMT6 seems to diminish the transactivation capacity of Tat and affects the interaction with host CCNT1. Post-translationally, acetylation by EP300, CREBBP, GCN5L2/GCN5 and PCAF regulates the transactivation activity of Tat. EP300-mediated acetylation of Lys-50 promotes dissociation of Tat from the TAR RNA through the competitive binding to PCAF's bromodomain. In addition, the non-acetylated Tat's N-terminus can also interact with PCAF. PCAF-mediated acetylation of Lys-28 enhances Tat's binding to CCNT1. Lys-50 is deacetylated by SIRT1. In terms of processing, polyubiquitination by host MDM2 does not target Tat to degradation, but activates its transactivation function and fosters interaction with CCNT1 and TAR RNA. Phosphorylated by EIF2AK2 on serine and threonine residues adjacent to the basic region important for TAR RNA binding and function. Phosphorylation of Tat by EIF2AK2 is dependent on the prior activation of EIF2AK2 by dsRNA.

It localises to the host nucleus. It is found in the host nucleolus. The protein resides in the host cytoplasm. The protein localises to the secreted. Its function is as follows. Transcriptional activator that increases RNA Pol II processivity, thereby increasing the level of full-length viral transcripts. Recognizes a hairpin structure at the 5'-LTR of the nascent viral mRNAs referred to as the transactivation responsive RNA element (TAR) and recruits the cyclin T1-CDK9 complex (P-TEFb complex) that will in turn hyperphosphorylate the RNA polymerase II to allow efficient elongation. The CDK9 component of P-TEFb and other Tat-activated kinases hyperphosphorylate the C-terminus of RNA Pol II that becomes stabilized and much more processive. Other factors such as HTATSF1/Tat-SF1, SUPT5H/SPT5, and HTATIP2 are also important for Tat's function. Besides its effect on RNA Pol II processivity, Tat induces chromatin remodeling of proviral genes by recruiting the histone acetyltransferases (HATs) CREBBP, EP300 and PCAF to the chromatin. This also contributes to the increase in proviral transcription rate, especially when the provirus integrates in transcriptionally silent region of the host genome. To ensure maximal activation of the LTR, Tat mediates nuclear translocation of NF-kappa-B by interacting with host RELA. Through its interaction with host TBP, Tat may also modulate transcription initiation. Tat can reactivate a latently infected cell by penetrating in it and transactivating its LTR promoter. In the cytoplasm, Tat is thought to act as a translational activator of HIV-1 mRNAs. Extracellular circulating Tat can be endocytosed by surrounding uninfected cells via the binding to several surface receptors such as CD26, CXCR4, heparan sulfate proteoglycans (HSPG) or LDLR. Neurons are rarely infected, but they internalize Tat via their LDLR. Through its interaction with nuclear HATs, Tat is potentially able to control the acetylation-dependent cellular gene expression. Modulates the expression of many cellular genes involved in cell survival, proliferation or in coding for cytokines or cytokine receptors. Tat plays a role in T-cell and neurons apoptosis. Tat induced neurotoxicity and apoptosis probably contribute to neuroAIDS. Circulating Tat also acts as a chemokine-like and/or growth factor-like molecule that binds to specific receptors on the surface of the cells, affecting many cellular pathways. In the vascular system, Tat binds to ITGAV/ITGB3 and ITGA5/ITGB1 integrins dimers at the surface of endothelial cells and competes with bFGF for heparin-binding sites, leading to an excess of soluble bFGF. The sequence is that of Protein Tat from Homo sapiens (Human).